We begin with the raw amino-acid sequence, 433 residues long: MKYRIKALLLASSLIITTITSVQAKEELLDRVAAIVNTGVVLESEVNDLLVNIKQQAKKNNQSLPSDKALRIQVMDKLINDSLLSQMGQRMGIQISDAQLDQTLNNMAREDKLTLAQFRQQVIDEGTSYEKYRENVRIELVSGEVSRNSVRRRIFVSPQEVDNLLKVMKEQSSNNVEYHLGHILIEFPADASQEDLAAAKTRATKVVELLNDGSDFAKIAITSSGDANALKGGDLGWKNINEMPTLFSELINDKPKDTIVGPIRTGLGYSIVKVLDIRGRKVVEVEEVKASHILIKPSIILSDEKAKSLLQGFLNQIDAGEATFEELAKEHSEGPTSVRGGDLGWADPKNYDPAFTEALATMKKGGYHKPFRSSFGWHIIKLEDRRMVDATSQLNENRAYQILFNRKYGMESTRWLKETRDEAYIEIFEQDNK.

Residues 1–24 (MKYRIKALLLASSLIITTITSVQA) form the signal peptide. 2 PpiC domains span residues 175–276 (NVEY…KVLD) and 285–384 (VEEV…KLED).

The protein resides in the periplasm. The enzyme catalyses [protein]-peptidylproline (omega=180) = [protein]-peptidylproline (omega=0). In terms of biological role, chaperone involved in the correct folding and assembly of outer membrane proteins. Recognizes specific patterns of aromatic residues and the orientation of their side chains, which are found more frequently in integral outer membrane proteins. May act in both early periplasmic and late outer membrane-associated steps of protein maturation. This is Chaperone SurA from Colwellia psychrerythraea (strain 34H / ATCC BAA-681) (Vibrio psychroerythus).